We begin with the raw amino-acid sequence, 1115 residues long: Iron-regulated protein FrpA (1115 aa).

Hemolysin-type calcium-binding repeat units follow at residues 755 to 772 (FGHNKNVSLYGNDGNDTL), 773 to 790 (IGGAGNDYLEGGSGSDTY), 901 to 918 (NGGLGDDYLYGADGNDLL), 919 to 936 (NGDAGNDSIYSGNGNDTL), 937 to 954 (DGGEGNDALYGYNGNDAL), 955 to 972 (NGGEGNDHLNGEDGNDTL), and 973 to 990 (IGGAGNDYLEGGSGSDTY).

The protein belongs to the RTX prokaryotic toxin (TC 1.C.11) family.

Its subcellular location is the cell outer membrane. It localises to the secreted. In terms of biological role, may participate in the pathogenesis of meningococcal disease. This chain is Iron-regulated protein FrpA (frpA), found in Neisseria meningitidis serogroup C.